Consider the following 433-residue polypeptide: Vesicle-associated protein (433 aa).

2 repeat units span residues 112 to 122 (GGGIGGGLGGG) and 219 to 229 (GGGIGGGLGGG). Residues 112 to 350 (GGGIGGGLGG…GGIGGGLGGG (239 aa)) form a 3 X 11 AA repeats of G-G-G-I-G-G-G-L-G-G-G region. A Nuclear localization signal motif is present at residues 266-274 (VDGKKKGKG). Copy 3 of the repeat occupies 340-350 (GGGIGGGLGGG). Disordered regions lie at residues 366–389 (RVGG…DGDG) and 411–433 (HGKG…NVSG). Basic and acidic residues predominate over residues 423-433 (DIERPDLNVSG).

Egg cortex.

It localises to the microsome membrane. The protein localises to the nucleus. Its subcellular location is the endoplasmic reticulum membrane. Its function is as follows. May function as a multidomain RNA-binding protein. May play a role in nuclear RNA processing and in early development. The sequence is that of Vesicle-associated protein (VAP-1) from Strongylocentrotus purpuratus (Purple sea urchin).